Consider the following 256-residue polypeptide: Zinc import ATP-binding protein ZnuC 1 (256 aa).

The ABC transporter domain occupies 5–220; sequence LTLQDVCVVF…PKYIALFGQQ (216 aa). 37 to 44 serves as a coordination point for ATP; that stretch reads GPNGAGKS. Residues 232–256 form a disordered region; it reads HHHNHDLSGEPSDGSCCSKNKKAHQ.

Belongs to the ABC transporter superfamily. Zinc importer (TC 3.A.1.15.5) family. In terms of assembly, the complex is composed of two ATP-binding proteins (ZnuC), two transmembrane proteins (ZnuB) and a solute-binding protein (ZnuA).

The protein resides in the cell inner membrane. It carries out the reaction Zn(2+)(out) + ATP(in) + H2O(in) = Zn(2+)(in) + ADP(in) + phosphate(in) + H(+)(in). Functionally, part of the ABC transporter complex ZnuABC involved in zinc import. Responsible for energy coupling to the transport system. The protein is Zinc import ATP-binding protein ZnuC 1 of Aliivibrio fischeri (strain ATCC 700601 / ES114) (Vibrio fischeri).